The chain runs to 326 residues: MSLFDWFANREKAEPPVLQPQSPQEREVADGLWTKCPACGVLTYTKDLQGNWMVCVECGHHLRVDSDERIRQLIDAKTWQPINEHLRPTDPLKFKDRKSYKDRIRDTQKATDLTDAVQTGHGRLDGLPIALGVMDFRFMGGSMGSVVGEKLCRLIEYATLERLPVVIICASGGARMQEGMLSLMQMAKISGALQNHREQKLLYIPVLTHPTTGGVTASFAMLGDLILAEPKATIGFAGRRVIEQTLREKLPDDFQTSEYLLHHGFVDAIVPRPQLKRTLAQLISLHQPFYPILPPLNADSNQVNPELVLSHTALAVDNQISVNQDG.

The CoA carboxyltransferase N-terminal domain occupies leucine 32–asparagine 301. Zn(2+) is bound by residues cysteine 36, cysteine 39, cysteine 55, and cysteine 58. Residues cysteine 36–cysteine 58 form a C4-type zinc finger.

Belongs to the AccD/PCCB family. In terms of assembly, acetyl-CoA carboxylase is a heterohexamer composed of biotin carboxyl carrier protein (AccB), biotin carboxylase (AccC) and two subunits each of ACCase subunit alpha (AccA) and ACCase subunit beta (AccD). Zn(2+) is required as a cofactor.

It is found in the cytoplasm. It carries out the reaction N(6)-carboxybiotinyl-L-lysyl-[protein] + acetyl-CoA = N(6)-biotinyl-L-lysyl-[protein] + malonyl-CoA. Its pathway is lipid metabolism; malonyl-CoA biosynthesis; malonyl-CoA from acetyl-CoA: step 1/1. Its function is as follows. Component of the acetyl coenzyme A carboxylase (ACC) complex. Biotin carboxylase (BC) catalyzes the carboxylation of biotin on its carrier protein (BCCP) and then the CO(2) group is transferred by the transcarboxylase to acetyl-CoA to form malonyl-CoA. In Synechocystis sp. (strain ATCC 27184 / PCC 6803 / Kazusa), this protein is Acetyl-coenzyme A carboxylase carboxyl transferase subunit beta.